The following is a 444-amino-acid chain: Protein cereblon (444 aa).

A disordered region spans residues 1-52 (MAGEGDPEDAAHNMGNHLPLLPAEEEEEDEIEMEVEDQDNKEPKKPNIINFD). The segment covering 23 to 37 (AEEEEEDEIEMEVED) has biased composition (acidic residues). The 242-residue stretch at 80–321 (CPVIPVLPQV…CELDIMNKCT (242 aa)) folds into the Lon N-terminal domain. Residues 320 to 428 (CTSLCCKQCQ…LTRSALLPTI (109 aa)) form the CULT domain. Residues C325 and C328 each coordinate Zn(2+). (S)-thalidomide contacts are provided by H380, W382, and W388. The Zn(2+) site is built by C393 and C396.

Belongs to the CRBN family. In terms of assembly, component of a DCX (DDB1-CUL4-X-box) protein ligase complex, at least composed of CRBN, CUL4A, DDB1 and RBX1. Interacts directly with DDB1. Interacts with KCNT1. Interacts with ILF2. Interacts with TRAF6 and ECSIT. In terms of processing, ubiquitinated, ubiquitination is mediated by its own DCX protein ligase complex.

It localises to the cytoplasm. It is found in the nucleus. The protein localises to the membrane. It participates in protein modification; protein ubiquitination. Its function is as follows. Substrate recognition component of a DCX (DDB1-CUL4-X-box) E3 protein ligase complex that mediates the ubiquitination and subsequent proteasomal degradation of target proteins, such as MEIS2, ILF2 or GLUL. Normal degradation of key regulatory proteins is required for normal limb outgrowth and expression of the fibroblast growth factor FGF8. Maintains presynaptic glutamate release and consequently cognitive functions, such as memory and learning, by negatively regulating large-conductance calcium-activated potassium (BK) channels in excitatory neurons. Likely to function by regulating the assembly and neuronal surface expression of BK channels via its interaction with KCNT1. May also be involved in regulating anxiety-like behaviors via a BK channel-independent mechanism. Plays a negative role in TLR4 signaling by interacting with TRAF6 and ECSIT, leading to inhibition of ECSIT ubiquitination, an important step of the signaling. The chain is Protein cereblon (CRBN) from Bos taurus (Bovine).